The sequence spans 205 residues: Protein PYRAB00100 (205 aa).

The AMMECR1 domain occupies 7–201 (EWGEFLVRLA…EEYPRGPVRR (195 aa)).

The chain is Protein PYRAB00100 from Pyrococcus abyssi (strain GE5 / Orsay).